The following is a 292-amino-acid chain: Ribosomal protein L11 methyltransferase (292 aa).

The S-adenosyl-L-methionine site is built by threonine 145, glycine 166, aspartate 188, and asparagine 229.

This sequence belongs to the methyltransferase superfamily. PrmA family.

It localises to the cytoplasm. The enzyme catalyses L-lysyl-[protein] + 3 S-adenosyl-L-methionine = N(6),N(6),N(6)-trimethyl-L-lysyl-[protein] + 3 S-adenosyl-L-homocysteine + 3 H(+). Functionally, methylates ribosomal protein L11. This chain is Ribosomal protein L11 methyltransferase, found in Alteromonas mediterranea (strain DSM 17117 / CIP 110805 / LMG 28347 / Deep ecotype).